The sequence spans 514 residues: Glucose-6-phosphate 1-dehydrogenase 2 (514 aa).

NADP(+)-binding residues include Arg69 and Lys176. Substrate-binding residues include His206, Lys210, Glu244, and Asp263. His268 acts as the Proton acceptor in catalysis. Lys366 is a binding site for substrate.

It belongs to the glucose-6-phosphate dehydrogenase family.

It carries out the reaction D-glucose 6-phosphate + NADP(+) = 6-phospho-D-glucono-1,5-lactone + NADPH + H(+). The protein operates within carbohydrate degradation; pentose phosphate pathway; D-ribulose 5-phosphate from D-glucose 6-phosphate (oxidative stage): step 1/3. In terms of biological role, catalyzes the oxidation of glucose 6-phosphate to 6-phosphogluconolactone. The protein is Glucose-6-phosphate 1-dehydrogenase 2 of Mycobacterium bovis (strain ATCC BAA-935 / AF2122/97).